Reading from the N-terminus, the 1562-residue chain is Phospholipid-transporting ATPase dnf1 (1562 aa).

Disordered regions lie at residues 1 to 38 (MKSSGIAGDSNGFETNFLNETTNREEDGAFNWNAADDG), 55 to 94 (LPLGIDENELDEIDINGDSKKLDSVEVDESHDVNSPSDSR), 115 to 134 (TPSTKTEQTSKGKGKKKKAH), and 146 to 166 (PLDDIEPTSPREASPVFNGRP). At 1 to 275 (MKSSGIAGDS…IAIMQMIPGW (275 aa)) the chain is on the extracellular side. The segment covering 12-21 (GFETNFLNET) has biased composition (polar residues). Over residues 60-69 (DENELDEIDI) the composition is skewed to acidic residues. The span at 71–86 (GDSKKLDSVEVDESHD) shows a compositional bias: basic and acidic residues. Residues 276-296 (STTGTYTTIIPLLIFISIAIL) form a helical membrane-spanning segment. The Cytoplasmic segment spans residues 297–574 (REGFDNYRRY…APSMQKVTNR (278 aa)). The tract at residues 347–406 (SQESASRSTIRSTDEREPERTSEDPPQLPPSPSSPSSPALSVKPNIDPQPPLYNSTLTTT) is disordered. Residues 358–369 (STDEREPERTSE) are compositionally biased toward basic and acidic residues. The span at 372–381 (PQLPPSPSSP) shows a compositional bias: pro residues. The chain crosses the membrane as a helical span at residues 575–595 (IVIFIFALVVSMAIYCTAAYF). The Extracellular portion of the chain corresponds to 596–614 (VWQKKVERKLWYLTNSKLS). The chain crosses the membrane as a helical span at residues 615-635 (FVPILVSFIILYNTMVPISLY). Residues 636 to 1309 (VSMEIIRVFQ…YILGTFYKEQ (674 aa)) lie on the Cytoplasmic side of the membrane. D684 functions as the 4-aspartylphosphate intermediate in the catalytic mechanism. ATP is bound by residues D684, K685, T686, E794, F843, S845, K848, and K866. Mg(2+) is bound at residue D684. A Mg(2+)-binding site is contributed by T686. S954 bears the Phosphoserine mark. ATP is bound by residues R1022, T1023, T1102, G1103, D1104, 1181–1188 (VIVIDGST), R1216, and K1222. Residue D1243 participates in Mg(2+) binding. Residues N1246 and D1247 each coordinate ATP. A helical transmembrane segment spans residues 1310–1330 (FFFLMQAIMQPFVGYTGQSLY). Residues 1331 to 1332 (ES) lie on the Extracellular side of the membrane. The helical transmembrane segment at 1333–1353 (WGLTCFNTLFSSLCVIGLGIF) threads the bilayer. The Cytoplasmic segment spans residues 1354–1381 (EKDLSASTVIAVPELYQKGINNEAFNWR). The helical transmembrane segment at 1382–1402 (VYFGWCSIAFIQAFLVFYVTY) threads the bilayer. The Extracellular segment spans residues 1403–1414 (SLFGMKELNDNN). A helical transmembrane segment spans residues 1415-1435 (IFAYGQLIFTAAIFIMNFKLV). The Cytoplasmic segment spans residues 1436–1443 (FIEMQYIN). A helical membrane pass occupies residues 1444 to 1464 (IISIIVLVLTSLAWFLFNIFI). Residues 1465 to 1490 (SEHYPDKNLYLARSQFLHHFGKNPSW) lie on the Extracellular side of the membrane. A helical transmembrane segment spans residues 1491–1511 (WLTMLFVMVCALTIDIVAQML). The Cytoplasmic portion of the chain corresponds to 1512–1562 (RRTLRPTDTDIFVEMENDAFVRSRFEQESGEFLQANAPSVDEIEQYLKSRD).

This sequence belongs to the cation transport ATPase (P-type) (TC 3.A.3) family. Type IV subfamily. Mg(2+) serves as cofactor.

It is found in the golgi apparatus. The protein localises to the trans-Golgi network membrane. Its subcellular location is the endosome membrane. The enzyme catalyses ATP + H2O + phospholipidSide 1 = ADP + phosphate + phospholipidSide 2.. It carries out the reaction a 1,2-diacyl-sn-glycero-3-phosphocholine(out) + ATP + H2O = a 1,2-diacyl-sn-glycero-3-phosphocholine(in) + ADP + phosphate + H(+). It catalyses the reaction a 1,2-diacyl-sn-glycero-3-phosphoethanolamine(out) + ATP + H2O = a 1,2-diacyl-sn-glycero-3-phosphoethanolamine(in) + ADP + phosphate + H(+). Functionally, catalytic component of a P4-ATPase flippase complex which catalyzes the hydrolysis of ATP coupled to the transport of phosphatidylcholine and small amounts of phosphatidylethanolamine from the lumen to the cytosolic leaflet of the trans-Golgi network and ensures the maintenance of asymmetric distribution of phospholipids. May be involved in transport from early endosomes to the trans-Golgi network (TGN). The polypeptide is Phospholipid-transporting ATPase dnf1 (Schizosaccharomyces pombe (strain 972 / ATCC 24843) (Fission yeast)).